A 380-amino-acid polypeptide reads, in one-letter code: Beta sliding clamp (380 aa).

The protein belongs to the beta sliding clamp family. In terms of assembly, forms a ring-shaped head-to-tail homodimer around DNA which binds and tethers DNA polymerases and other proteins to the DNA. The DNA replisome complex has a single clamp-loading complex (3 tau and 1 each of delta, delta', psi and chi subunits) which binds 3 Pol III cores (1 core on the leading strand and 2 on the lagging strand) each with a beta sliding clamp dimer. Additional proteins in the replisome are other copies of gamma, psi and chi, Ssb, DNA helicase and RNA primase.

The protein resides in the cytoplasm. In terms of biological role, confers DNA tethering and processivity to DNA polymerases and other proteins. Acts as a clamp, forming a ring around DNA (a reaction catalyzed by the clamp-loading complex) which diffuses in an ATP-independent manner freely and bidirectionally along dsDNA. Initially characterized for its ability to contact the catalytic subunit of DNA polymerase III (Pol III), a complex, multichain enzyme responsible for most of the replicative synthesis in bacteria; Pol III exhibits 3'-5' exonuclease proofreading activity. The beta chain is required for initiation of replication as well as for processivity of DNA replication. The polypeptide is Beta sliding clamp (dnaN) (Lactococcus lactis subsp. lactis (strain IL1403) (Streptococcus lactis)).